The following is a 160-amino-acid chain: Cytochrome b6-f complex subunit 4 (160 aa).

Transmembrane regions (helical) follow at residues 36–56 (ILFT…GLAI), 95–115 (LLGI…PFIE), and 131–151 (AVFL…CFPI).

The protein belongs to the cytochrome b family. PetD subfamily. As to quaternary structure, the 4 large subunits of the cytochrome b6-f complex are cytochrome b6, subunit IV (17 kDa polypeptide, PetD), cytochrome f and the Rieske protein, while the 4 small subunits are PetG, PetL, PetM and PetN. The complex functions as a dimer.

It is found in the cellular thylakoid membrane. Its function is as follows. Component of the cytochrome b6-f complex, which mediates electron transfer between photosystem II (PSII) and photosystem I (PSI), cyclic electron flow around PSI, and state transitions. This chain is Cytochrome b6-f complex subunit 4, found in Picosynechococcus sp. (strain ATCC 27264 / PCC 7002 / PR-6) (Agmenellum quadruplicatum).